A 380-amino-acid chain; its full sequence is Beta sliding clamp (380 aa).

Belongs to the beta sliding clamp family. Forms a ring-shaped head-to-tail homodimer around DNA which binds and tethers DNA polymerases and other proteins to the DNA. The DNA replisome complex has a single clamp-loading complex (3 tau and 1 each of delta, delta', psi and chi subunits) which binds 3 Pol III cores (1 core on the leading strand and 2 on the lagging strand) each with a beta sliding clamp dimer. Additional proteins in the replisome are other copies of gamma, psi and chi, Ssb, DNA helicase and RNA primase.

It is found in the cytoplasm. In terms of biological role, confers DNA tethering and processivity to DNA polymerases and other proteins. Acts as a clamp, forming a ring around DNA (a reaction catalyzed by the clamp-loading complex) which diffuses in an ATP-independent manner freely and bidirectionally along dsDNA. Initially characterized for its ability to contact the catalytic subunit of DNA polymerase III (Pol III), a complex, multichain enzyme responsible for most of the replicative synthesis in bacteria; Pol III exhibits 3'-5' exonuclease proofreading activity. The beta chain is required for initiation of replication as well as for processivity of DNA replication. In Halalkalibacterium halodurans (strain ATCC BAA-125 / DSM 18197 / FERM 7344 / JCM 9153 / C-125) (Bacillus halodurans), this protein is Beta sliding clamp (dnaN).